We begin with the raw amino-acid sequence, 621 residues long: Chaperone protein HtpG (621 aa).

Residues 1–325 (MTDASVKETF…SQDLSLNVSR (325 aa)) form an a; substrate-binding region. The tract at residues 326–541 (EMLQSDPKLA…EGDIDVNLER (216 aa)) is b. The segment at 542-621 (MLKRHGQLQD…RLGSVMDSAL (80 aa)) is c.

The protein belongs to the heat shock protein 90 family. Homodimer.

The protein localises to the cytoplasm. Molecular chaperone. Has ATPase activity. The polypeptide is Chaperone protein HtpG (Roseobacter denitrificans (strain ATCC 33942 / OCh 114) (Erythrobacter sp. (strain OCh 114))).